The following is an 867-amino-acid chain: uncharacterized protein (867 aa).

The zn(2)-C6 fungal-type DNA-binding region spans 76 to 108; sequence CDFCRQKKIRCDMDQSPRPGNACINCRKHHLDC. Disordered stretches follow at residues 110-167 and 217-257; these read FTRT…ITPV and PQLA…NSNL. 2 stretches are compositionally biased toward polar residues: residues 137-167 and 248-257; these read SAKSSSPAVNGSVFSGNEASPSSRAPSITPV and SISSYTNSNL.

It localises to the nucleus. This is an uncharacterized protein from Schizosaccharomyces pombe (strain 972 / ATCC 24843) (Fission yeast).